Here is a 602-residue protein sequence, read N- to C-terminus: MSERRRSAVALSSRAHAFSVEALIGSNKKRKLRDWEEKGLDLSMEALSPAGPLGDTEDAAAHGLEPHPDSEQSTGSDSEVLTERTSCSFSTHTDLASGAAGPVPAAMSSMEEIQVELQCADLWKRFHDIGTEMIITKAGRRMFPAMRVKITGLDPHQQYYIAMDIVPVDNKRYRYVYHSSKWMVAGNADSPVPPRVYIHPDSLASGDTWMRQVVSFDKLKLTNNELDDQGHIILHSMHKYQPRVHVIRKDFSSDLSPTKPVPVGDGVKTFNFPETVFTTVTAYQNQQITRLKIDRNPFAKGFRDSGRNRTGLEAIMETYAFWRPPVRTLTFEDFTTMQKQQGGSTGTSPTTSSTGTPSPSASSHLLSPSCSPPTFHLAPNTFNVGCRESQLCNLNLSDYPPCARSNMAALQSYPGLSDSGYNRLQSGTTSATQPSETFMPQRTPSLISGIPTPPSLPGNSKMEAYGGQLGSFPTSQFQYVMQAGNAASSSSSPHMFGGSHMQQSSYNAFSLHNPYNLYGYNFPTSPRLAASPEKLSASQSTLLCSSPSNGAFGERQYLPSGMEHSMHMISPSPNNQQATNTCDGRQYGAVPGSSSQMSVHMV.

A disordered region spans residues 46 to 84; the sequence is ALSPAGPLGDTEDAAAHGLEPHPDSEQSTGSDSEVLTER. A compositionally biased stretch (polar residues) spans 71–84; that stretch reads EQSTGSDSEVLTER. A DNA-binding region (T-box) is located at residues 122–304; sequence LWKRFHDIGT…RNPFAKGFRD (183 aa). Thr-330 bears the Phosphothreonine mark. Disordered stretches follow at residues 338–369 and 425–447; these read QKQQ…LSPS and QSGT…PSLI. Residues 346 to 369 show a composition bias toward low complexity; the sequence is GTSPTTSSTGTPSPSASSHLLSPS. Residues 425–446 are compositionally biased toward polar residues; that stretch reads QSGTTSATQPSETFMPQRTPSL.

In terms of assembly, can form a heterodimer with TBX18.

The protein resides in the nucleus. Probable transcriptional regulator involved in the development of the skeleton of the limb, vertebral column and head. Acts by controlling the number of mesenchymal precursor cells and chondrocytes. The chain is T-box transcription factor TBX15 (TBX15) from Homo sapiens (Human).